Consider the following 502-residue polypeptide: CDP-diacylglycerol--glycerol-3-phosphate 3-phosphatidyltransferase (502 aa).

Residue 58–65 coordinates ATP; sequence STLYIGKE. PLD phosphodiesterase domains are found at residues 143-169 and 410-443; these read GWGLQHMKIYGADDNLIISGANLSRDY and KGNTYHAKGFWLSTQHHKHPFLTTIGSSNYTSRS. Active-site residues include histidine 148, lysine 150, and aspartate 155.

This sequence belongs to the CDP-alcohol phosphatidyltransferase class-II family.

Its subcellular location is the mitochondrion. It catalyses the reaction a CDP-1,2-diacyl-sn-glycerol + sn-glycerol 3-phosphate = a 1,2-diacyl-sn-glycero-3-phospho-(1'-sn-glycero-3'-phosphate) + CMP + H(+). The protein operates within phospholipid metabolism; phosphatidylglycerol biosynthesis; phosphatidylglycerol from CDP-diacylglycerol: step 1/2. Functionally, functions in the biosynthesis of the anionic phospholipids phosphatidylglycerol and cardiolipin. This Schizosaccharomyces pombe (strain 972 / ATCC 24843) (Fission yeast) protein is CDP-diacylglycerol--glycerol-3-phosphate 3-phosphatidyltransferase (pgs1).